The following is a 130-amino-acid chain: Small ribosomal subunit protein uS9 (130 aa).

Belongs to the universal ribosomal protein uS9 family.

This chain is Small ribosomal subunit protein uS9, found in Anoxybacillus flavithermus (strain DSM 21510 / WK1).